Consider the following 595-residue polypeptide: DNA mismatch repair protein MutL (595 aa).

Belongs to the DNA mismatch repair MutL/HexB family.

In terms of biological role, this protein is involved in the repair of mismatches in DNA. It is required for dam-dependent methyl-directed DNA mismatch repair. May act as a 'molecular matchmaker', a protein that promotes the formation of a stable complex between two or more DNA-binding proteins in an ATP-dependent manner without itself being part of a final effector complex. In Rhodopseudomonas palustris (strain TIE-1), this protein is DNA mismatch repair protein MutL.